Here is a 474-residue protein sequence, read N- to C-terminus: MEGESAETEPLIQSSSAADRPDPAAEAAARFTVYRRRWFILSVLCLLNCSNAMAWLTFAPVAGQSAQLLCVSLPLVNWLSLVFVLAAVVCSFSSMWVLDTLGLRCSLIGSSWLNACGCVLRVCGVLSVTPQWAVFAVVMCGQTLCALAQPLVIFAPTKLAALWFPDHQRATANMLASMANTVGLLLANLLSPLIVSYSGDLFLLLLIYSIPAAVACLLATLGIHQAVPPTPASASSSSSASEPFLQGIRQLLRNRAYWILLLCFGSGIGIFTCFSTLLEQILCVKGYSNGFAGVCGAVSIVCGVAGAFLLSLYVDRSKKFMEVMKICMCLTSVSCSAFAVVSQLPAQSVLLVLVCCCFGLFGYSVYPVGMELSVETTHPLGEATSAGLIFTSGQIQAALYLLLLQALATPTHSPTSVCAADTSLNWTVPVLVMAGVCAISSCVFVVFFHTEYRRLRAEADSATEPEPTGDAADA.

The interval 1–20 (MEGESAETEPLIQSSSAADR) is disordered. 12 helical membrane-spanning segments follow: residues 38-58 (WFILSVLCLLNCSNAMAWLTF), 69-89 (LCVSLPLVNWLSLVFVLAAVV), 105-126 (CSLIGSSWLNACGCVLRVCGVL), 134-154 (VFAVVMCGQTLCALAQPLVIF), 175-195 (LASMANTVGLLLANLLSPLIV), 201-221 (LFLLLLIYSIPAAVACLLATL), 258-278 (WILLLCFGSGIGIFTCFSTLL), 290-310 (GFAGVCGAVSIVCGVAGAFLL), 326-346 (ICMCLTSVSCSAFAVVSQLPA), 349-369 (VLLVLVCCCFGLFGYSVYPVG), 388-408 (LIFTSGQIQAALYLLLLQALA), and 428-448 (VPVLVMAGVCAISSCVFVVFF).

The protein belongs to the major facilitator superfamily.

It is found in the membrane. In Danio rerio (Zebrafish), this protein is Solute carrier family 49 member A3 (slc49a3).